The following is a 250-amino-acid chain: MVAGSDAGRALGVLSVVCLLHCFGFISCFSQQIYGVVYGNVTFHVPSNVPLKEVLWKKQKDKVAELENSEFRAFSSFKNRVYLDTVSGSLTIYNLTSSDEDEYEMESPNITDTMKFFLYVLESLPSPTLTCALTNGSIEVQCMIPEHYNSHRGLIMYSWDCPMEQCKRNSTSIYFKMENDLPQKIQCTLSNPLFNTTSSIILTTCIPSSGHSRHRYALIPIPLAVITTCIVLYMNGILKCDRKPDRTNSN.

An N-terminal signal peptide occupies residues 1 to 28 (MVAGSDAGRALGVLSVVCLLHCFGFISC). Residues 29 to 215 (FSQQIYGVVY…IPSSGHSRHR (187 aa)) lie on the Extracellular side of the membrane. The 92-residue stretch at 30–121 (SQQIYGVVYG…DTMKFFLYVL (92 aa)) folds into the Ig-like domain. N-linked (GlcNAc...) asparagine glycans are attached at residues N40, N94, N109, N135, N169, and N195. The cysteines at positions 142 and 187 are disulfide-linked. A helical membrane pass occupies residues 216–238 (YALIPIPLAVITTCIVLYMNGIL). The Cytoplasmic portion of the chain corresponds to 239–250 (KCDRKPDRTNSN).

Interacts with CD2. Interacts with CMTM6. As to quaternary structure, (Microbial infection) Interacts with human cytomegalovirus protein UL148; this interaction retains immature CD58 intracellularly.

It localises to the cell membrane. In terms of biological role, ligand of the T-lymphocyte CD2 glycoprotein. This interaction is important in mediating thymocyte interactions with thymic epithelial cells, antigen-independent and -dependent interactions of T-lymphocytes with target cells and antigen-presenting cells and the T-lymphocyte rosetting with erythrocytes. In addition, the LFA-3/CD2 interaction may prime response by both the CD2+ and LFA-3+ cells. This Homo sapiens (Human) protein is Lymphocyte function-associated antigen 3 (CD58).